A 294-amino-acid polypeptide reads, in one-letter code: Small ribosomal subunit protein uS3 (294 aa).

Residues 39–107 (VREYLKTKLK…PVAVNIEEVR (69 aa)) form the KH type-2 domain. The disordered stretch occupies residues 210 to 294 (RNDLPAVETP…AAPAADVKGE (85 aa)). A compositionally biased stretch (basic and acidic residues) spans 219–238 (PRPDEERRPRGPRRDGRPGG). Low complexity-rich tracts occupy residues 249-258 (RPAAGNSAPA) and 281-294 (VAAPAAPAADVKGE).

The protein belongs to the universal ribosomal protein uS3 family. As to quaternary structure, part of the 30S ribosomal subunit. Forms a tight complex with proteins S10 and S14.

Functionally, binds the lower part of the 30S subunit head. Binds mRNA in the 70S ribosome, positioning it for translation. The polypeptide is Small ribosomal subunit protein uS3 (Verminephrobacter eiseniae (strain EF01-2)).